A 342-amino-acid polypeptide reads, in one-letter code: Protein pelota homolog (342 aa).

The protein belongs to the eukaryotic release factor 1 family. Pelota subfamily. As to quaternary structure, monomer. The cofactor is a divalent metal cation.

The protein localises to the cytoplasm. Its function is as follows. May function in recognizing stalled ribosomes, interact with stem-loop structures in stalled mRNA molecules, and effect endonucleolytic cleavage of the mRNA. May play a role in the release non-functional ribosomes and degradation of damaged mRNAs. Has endoribonuclease activity. The protein is Protein pelota homolog of Sulfolobus acidocaldarius (strain ATCC 33909 / DSM 639 / JCM 8929 / NBRC 15157 / NCIMB 11770).